Consider the following 371-residue polypeptide: Cytochrome b (371 aa).

A run of 4 helical transmembrane segments spans residues 25 to 45, 69 to 90, 105 to 125, and 170 to 190; these read FGSL…FLAI, WIMQ…YTHI, WLSG…GYVL, and FFAL…IHII. Heme b contacts are provided by His-75 and His-89. 2 residues coordinate heme b: His-174 and His-188. Position 193 (His-193) interacts with a ubiquinone. The next 4 helical transmembrane spans lie at 218 to 238, 280 to 300, 312 to 332, and 339 to 358; these read YKDM…MTFA, LGGT…PFTH, LTQI…WTAT, and FIYI…IMNP.

It belongs to the cytochrome b family. As to quaternary structure, the cytochrome bc1 complex contains 3 respiratory subunits (MT-CYB, CYC1 and UQCRFS1), 2 core proteins (UQCRC1 and UQCRC2) and probably 6 low-molecular weight proteins. Heme b is required as a cofactor.

The protein resides in the mitochondrion inner membrane. In terms of biological role, component of the ubiquinol-cytochrome c reductase complex (complex III or cytochrome b-c1 complex) that is part of the mitochondrial respiratory chain. The b-c1 complex mediates electron transfer from ubiquinol to cytochrome c. Contributes to the generation of a proton gradient across the mitochondrial membrane that is then used for ATP synthesis. This is Cytochrome b (MT-CYB) from Micruroides euryxanthus (Sonoran coral snake).